Consider the following 160-residue polypeptide: Transcriptional repressor NrdR (160 aa).

The span at M1 to T11 shows a compositional bias: polar residues. A disordered region spans residues M1–E20. A zinc finger lies at C3–C34. In terms of domain architecture, ATP-cone spans L49–D139.

The protein belongs to the NrdR family. The cofactor is Zn(2+).

Negatively regulates transcription of bacterial ribonucleotide reductase nrd genes and operons by binding to NrdR-boxes. This Rhodopseudomonas palustris (strain HaA2) protein is Transcriptional repressor NrdR.